A 216-amino-acid chain; its full sequence is Chaperone protein TorD (216 aa).

It belongs to the TorD/DmsD family. TorD subfamily.

The protein localises to the cytoplasm. Its function is as follows. Involved in the biogenesis of TorA. Acts on TorA before the insertion of the molybdenum cofactor and, as a result, probably favors a conformation of the apoenzyme that is competent for acquiring the cofactor. This chain is Chaperone protein TorD, found in Photobacterium profundum (strain SS9).